An 87-amino-acid chain; its full sequence is Cell division topological specificity factor (87 aa).

Belongs to the MinE family.

Functionally, prevents the cell division inhibition by proteins MinC and MinD at internal division sites while permitting inhibition at polar sites. This ensures cell division at the proper site by restricting the formation of a division septum at the midpoint of the long axis of the cell. The sequence is that of Cell division topological specificity factor from Chelativorans sp. (strain BNC1).